The chain runs to 401 residues: Lsg locus putative protein 1 (401 aa).

11 helical membrane-spanning segments follow: residues 8–28, 36–56, 87–107, 132–152, 162–182, 199–219, 237–257, 282–302, 320–340, 352–372, and 374–394; these read VIYLVGELSSKLVPFLLLPYL, GYGSLSYYQTFLSLFLIVVSL, IIGSIILIGCWIAQSEILFYA, SYAFIQFSLTVTGAVFTVALL, KRILAILLSNLVVWFFSYFLY, ALFYILGFGLPLILHYASFFL, LGLYAMGAQLALVVSIAIQAL, WALFSFLLIPIPALIMWIIPE, FILFLISTTLSIPYLILVNYL, CSVLSTIIYVASLVALTFTEI, and YIPYAGIIGSLSIIPILYFMT.

It belongs to the polysaccharide synthase family. HI_0867/HI_1700 subfamily.

The protein resides in the cell membrane. The sequence is that of Lsg locus putative protein 1 from Haemophilus influenzae (strain ATCC 51907 / DSM 11121 / KW20 / Rd).